A 654-amino-acid chain; its full sequence is Translation factor GUF1, mitochondrial (654 aa).

The tr-type G domain occupies 57–237 (ENYRNFSIVA…SVIKNIPSPV (181 aa)). Residues 66–73 (AHVDHGKS), 130–134 (DTPGH), and 184–187 (NKID) contribute to the GTP site.

The protein belongs to the TRAFAC class translation factor GTPase superfamily. Classic translation factor GTPase family. LepA subfamily.

The protein localises to the mitochondrion inner membrane. It carries out the reaction GTP + H2O = GDP + phosphate + H(+). Functionally, promotes mitochondrial protein synthesis. May act as a fidelity factor of the translation reaction, by catalyzing a one-codon backward translocation of tRNAs on improperly translocated ribosomes. Binds to mitochondrial ribosomes in a GTP-dependent manner. The chain is Translation factor GUF1, mitochondrial from Candida dubliniensis (strain CD36 / ATCC MYA-646 / CBS 7987 / NCPF 3949 / NRRL Y-17841) (Yeast).